A 608-amino-acid polypeptide reads, in one-letter code: Dextranase (608 aa).

The first 19 residues, 1 to 19, serve as a signal peptide directing secretion; it reads MATMLKLLALTLAISESAI. Residues 20–34 constitute a propeptide that is removed on maturation; it reads GAVMHPPGNSHPGTH. Residues Asn39, Asn571, and Asn574 are each glycosylated (N-linked (GlcNAc...) asparagine).

Belongs to the glycosyl hydrolase 49 family. In terms of processing, N-glycosylated.

It localises to the secreted. It catalyses the reaction Endohydrolysis of (1-&gt;6)-alpha-D-glucosidic linkages in dextran.. This Talaromyces minioluteus (Filamentous fungus) protein is Dextranase (DEX).